A 156-amino-acid chain; its full sequence is Small ribosomal subunit protein uS7 (156 aa).

Belongs to the universal ribosomal protein uS7 family. As to quaternary structure, part of the 30S ribosomal subunit. Contacts proteins S9 and S11.

One of the primary rRNA binding proteins, it binds directly to 16S rRNA where it nucleates assembly of the head domain of the 30S subunit. Is located at the subunit interface close to the decoding center, probably blocks exit of the E-site tRNA. This is Small ribosomal subunit protein uS7 from Pseudomonas aeruginosa (strain LESB58).